The sequence spans 62 residues: Large ribosomal subunit protein bL28 (62 aa).

It belongs to the bacterial ribosomal protein bL28 family.

The polypeptide is Large ribosomal subunit protein bL28 (Acetivibrio thermocellus (strain ATCC 27405 / DSM 1237 / JCM 9322 / NBRC 103400 / NCIMB 10682 / NRRL B-4536 / VPI 7372) (Clostridium thermocellum)).